A 92-amino-acid chain; its full sequence is Small ribosomal subunit protein uS19 (92 aa).

It belongs to the universal ribosomal protein uS19 family.

Protein S19 forms a complex with S13 that binds strongly to the 16S ribosomal RNA. The sequence is that of Small ribosomal subunit protein uS19 from Borrelia duttonii (strain Ly).